Consider the following 150-residue polypeptide: Putative transmembrane protein DDB_G0277665 (150 aa).

The next 2 membrane-spanning stretches (helical) occupy residues 4 to 24 (TLII…FNIL) and 42 to 62 (VIVG…FLPL).

Its subcellular location is the membrane. The protein is Putative transmembrane protein DDB_G0277665 of Dictyostelium discoideum (Social amoeba).